A 151-amino-acid polypeptide reads, in one-letter code: MKKIDVKILDSRIGAQFPLPAYATTGSAGLDLRALTDEAFEIQPGETKLIPTGLSVYIADPQLAAVILPRSGLGHKHGVVLGNLVGLIDSDYQGPLMVSMWNRSDKPFKVEVGDRIAQLVFVPVVQAEFNIVAEFEQTDRGEGGFGHSGKK.

Substrate is bound by residues 70 to 72, Asn83, 87 to 89, and Met97; these read RSG and LID.

This sequence belongs to the dUTPase family. Mg(2+) is required as a cofactor.

It catalyses the reaction dUTP + H2O = dUMP + diphosphate + H(+). Its pathway is pyrimidine metabolism; dUMP biosynthesis; dUMP from dCTP (dUTP route): step 2/2. Its function is as follows. This enzyme is involved in nucleotide metabolism: it produces dUMP, the immediate precursor of thymidine nucleotides and it decreases the intracellular concentration of dUTP so that uracil cannot be incorporated into DNA. In Actinobacillus succinogenes (strain ATCC 55618 / DSM 22257 / CCUG 43843 / 130Z), this protein is Deoxyuridine 5'-triphosphate nucleotidohydrolase.